Here is a 103-residue protein sequence, read N- to C-terminus: Histone H4 (103 aa).

Positions 1-14 (MSGRGKGGKGLGKG) are enriched in gly residues. The tract at residues 1–20 (MSGRGKGGKGLGKGGAKRHR) is disordered. Ser2 carries the post-translational modification N-acetylserine. N6-acetyl-N6-methyllysine; alternate is present on residues Lys6 and Lys13. Lys17 is subject to N6-acetyllysine. Residues 17-21 (KRHRR) mediate DNA binding.

The protein belongs to the histone H4 family. The nucleosome is a histone octamer containing two molecules each of H2A, H2B, H3 and H4 assembled in one H3-H4 heterotetramer and two H2A-H2B heterodimers. The octamer wraps approximately 147 bp of DNA.

It localises to the nucleus. The protein localises to the chromosome. Core component of nucleosome. Nucleosomes wrap and compact DNA into chromatin, limiting DNA accessibility to the cellular machineries which require DNA as a template. Histones thereby play a central role in transcription regulation, DNA repair, DNA replication and chromosomal stability. DNA accessibility is regulated via a complex set of post-translational modifications of histones, also called histone code, and nucleosome remodeling. In Mytilus chilensis (Chilean blue mussel), this protein is Histone H4.